We begin with the raw amino-acid sequence, 187 residues long: Ribosome-recycling factor (187 aa).

Belongs to the RRF family.

It is found in the cytoplasm. In terms of biological role, responsible for the release of ribosomes from messenger RNA at the termination of protein biosynthesis. May increase the efficiency of translation by recycling ribosomes from one round of translation to another. This Orientia tsutsugamushi (strain Ikeda) (Rickettsia tsutsugamushi) protein is Ribosome-recycling factor.